A 319-amino-acid chain; its full sequence is Ribonuclease Z (319 aa).

Zn(2+) is bound by residues H62, H64, D66, H67, H145, D215, and H273. D66 functions as the Proton acceptor in the catalytic mechanism.

Belongs to the RNase Z family. As to quaternary structure, homodimer. It depends on Zn(2+) as a cofactor.

The enzyme catalyses Endonucleolytic cleavage of RNA, removing extra 3' nucleotides from tRNA precursor, generating 3' termini of tRNAs. A 3'-hydroxy group is left at the tRNA terminus and a 5'-phosphoryl group is left at the trailer molecule.. Functionally, zinc phosphodiesterase, which displays some tRNA 3'-processing endonuclease activity. Probably involved in tRNA maturation, by removing a 3'-trailer from precursor tRNA. The polypeptide is Ribonuclease Z (Borrelia recurrentis (strain A1)).